We begin with the raw amino-acid sequence, 281 residues long: Protoheme IX farnesyltransferase (281 aa).

9 helical membrane-spanning segments follow: residues 16–36, 38–58, 75–95, 101–121, 129–149, 150–170, 202–224, 228–250, and 261–281; these read TFLL…GADF, FVIA…INMW, VPAG…IFAI, FLVS…DIVV, KSPY…LGGW, VAVQ…LLWI, ASWA…YVLL, IFYL…KFAL, and YKLA…GVFL.

This sequence belongs to the UbiA prenyltransferase family. Protoheme IX farnesyltransferase subfamily.

Its subcellular location is the cell membrane. The enzyme catalyses heme b + (2E,6E)-farnesyl diphosphate + H2O = Fe(II)-heme o + diphosphate. The protein operates within porphyrin-containing compound metabolism; heme O biosynthesis; heme O from protoheme: step 1/1. Its function is as follows. Converts heme B (protoheme IX) to heme O by substitution of the vinyl group on carbon 2 of heme B porphyrin ring with a hydroxyethyl farnesyl side group. This Archaeoglobus fulgidus (strain ATCC 49558 / DSM 4304 / JCM 9628 / NBRC 100126 / VC-16) protein is Protoheme IX farnesyltransferase.